The primary structure comprises 88 residues: Small ribosomal subunit protein uS15 (88 aa).

The protein belongs to the universal ribosomal protein uS15 family. As to quaternary structure, part of the 30S ribosomal subunit. Forms a bridge to the 50S subunit in the 70S ribosome, contacting the 23S rRNA.

In terms of biological role, one of the primary rRNA binding proteins, it binds directly to 16S rRNA where it helps nucleate assembly of the platform of the 30S subunit by binding and bridging several RNA helices of the 16S rRNA. Functionally, forms an intersubunit bridge (bridge B4) with the 23S rRNA of the 50S subunit in the ribosome. The protein is Small ribosomal subunit protein uS15 of Leptospira interrogans serogroup Icterohaemorrhagiae serovar copenhageni (strain Fiocruz L1-130).